Consider the following 432-residue polypeptide: Protein ABHD8 (432 aa).

2 disordered regions span residues 47–69 and 121–149; these read KHAGPAPAPTPPPPLSDAAQGDQ and PAGSDGRSVPGSAGSGSGGRRRRARRPKR. Pro residues predominate over residues 52–61; the sequence is APAPTPPPPL. The span at 139–149 shows a compositional bias: basic residues; that stretch reads GRRRRARRPKR. The 103-residue stretch at 170–272 folds into the AB hydrolase-1 domain; that stretch reads VLFFIHGVGG…HKVIMINGGG (103 aa). Active-site charge relay system residues include serine 245, aspartate 363, and histidine 391.

The protein belongs to the AB hydrolase superfamily. As to quaternary structure, interacts with NLRP3 (via NACHT and LLR domains); this interaction is enhanced in the presence of NLRP3 inflammasome inducers, such as ATP, nigericin, silica, or alum. Interacts with ZDHHC12.

It localises to the cytoplasm. Functionally, negatively regulates NLRP3-driven inflammation. Promotes NLRP3 degradation through the chaperone-mediated autophagy (CMA) pathway, hence attenuating inflammasome activation and IL1B secretion. Acts by recruiting palmitoyltransferase ZDHHC12 to NLRP3, facilitating NLRP3 palmitoylation and subsequent degradation. The chain is Protein ABHD8 from Bos taurus (Bovine).